The sequence spans 328 residues: Lipoyl synthase (328 aa).

The [4Fe-4S] cluster site is built by cysteine 56, cysteine 61, cysteine 67, cysteine 82, cysteine 86, cysteine 89, and serine 298. A Radical SAM core domain is found at 68–287 (WEDREATFLI…KEEAEEIGFS (220 aa)).

Belongs to the radical SAM superfamily. Lipoyl synthase family. [4Fe-4S] cluster is required as a cofactor.

The protein resides in the cytoplasm. The catalysed reaction is [[Fe-S] cluster scaffold protein carrying a second [4Fe-4S](2+) cluster] + N(6)-octanoyl-L-lysyl-[protein] + 2 oxidized [2Fe-2S]-[ferredoxin] + 2 S-adenosyl-L-methionine + 4 H(+) = [[Fe-S] cluster scaffold protein] + N(6)-[(R)-dihydrolipoyl]-L-lysyl-[protein] + 4 Fe(3+) + 2 hydrogen sulfide + 2 5'-deoxyadenosine + 2 L-methionine + 2 reduced [2Fe-2S]-[ferredoxin]. It functions in the pathway protein modification; protein lipoylation via endogenous pathway; protein N(6)-(lipoyl)lysine from octanoyl-[acyl-carrier-protein]: step 2/2. Catalyzes the radical-mediated insertion of two sulfur atoms into the C-6 and C-8 positions of the octanoyl moiety bound to the lipoyl domains of lipoate-dependent enzymes, thereby converting the octanoylated domains into lipoylated derivatives. The sequence is that of Lipoyl synthase from Streptomyces avermitilis (strain ATCC 31267 / DSM 46492 / JCM 5070 / NBRC 14893 / NCIMB 12804 / NRRL 8165 / MA-4680).